Here is a 37-residue protein sequence, read N- to C-terminus: Large ribosomal subunit protein bL36 (37 aa).

The protein belongs to the bacterial ribosomal protein bL36 family.

This is Large ribosomal subunit protein bL36 from Geobacillus kaustophilus (strain HTA426).